Consider the following 353-residue polypeptide: Putative glycosyltransferase TagX (353 aa).

Belongs to the glycosyltransferase 2 family.

In Staphylococcus aureus (strain MSSA476), this protein is Putative glycosyltransferase TagX (tagX).